A 371-amino-acid chain; its full sequence is Peptide chain release factor 2 (371 aa).

At Gln-253 the chain carries N5-methylglutamine.

It belongs to the prokaryotic/mitochondrial release factor family. Post-translationally, methylated by PrmC. Methylation increases the termination efficiency of RF2.

It localises to the cytoplasm. Its function is as follows. Peptide chain release factor 2 directs the termination of translation in response to the peptide chain termination codons UGA and UAA. The polypeptide is Peptide chain release factor 2 (Mycobacterium sp. (strain JLS)).